A 585-amino-acid polypeptide reads, in one-letter code: ADP-ribosylation factor-binding protein GGA2 (585 aa).

Residues 33–169 (ACRMSLAEPD…LLKYKGYAFP (137 aa)) enclose the VHS domain. Residues K180 and K287 each participate in a glycyl lysine isopeptide (Lys-Gly) (interchain with G-Cter in ubiquitin) cross-link. The region spanning 196–321 (EIAQAAKLEE…LLEKFNLLKN (126 aa)) is the GAT domain. The interval 358 to 378 (LDEAPSQGNNNTNGTGTPAAA) is disordered. The segment covering 365-374 (GNNNTNGTGT) has biased composition (low complexity). A GAE domain is found at 466 to 581 (TTTAPARTLV…TQAEETAVFT (116 aa)).

As to quaternary structure, binds to ARF1 and ARF2.

It is found in the golgi apparatus. The protein resides in the trans-Golgi network. In terms of biological role, may play a role in the regulation of membrane traffic through the trans-Golgi network. The sequence is that of ADP-ribosylation factor-binding protein GGA2 (GGA2) from Saccharomyces cerevisiae (strain ATCC 204508 / S288c) (Baker's yeast).